Consider the following 118-residue polypeptide: Ribosome-binding factor A (118 aa).

Belongs to the RbfA family. In terms of assembly, monomer. Binds 30S ribosomal subunits, but not 50S ribosomal subunits or 70S ribosomes.

The protein resides in the cytoplasm. Functionally, one of several proteins that assist in the late maturation steps of the functional core of the 30S ribosomal subunit. Associates with free 30S ribosomal subunits (but not with 30S subunits that are part of 70S ribosomes or polysomes). Required for efficient processing of 16S rRNA. May interact with the 5'-terminal helix region of 16S rRNA. The chain is Ribosome-binding factor A from Dehalococcoides mccartyi (strain ATCC BAA-2266 / KCTC 15142 / 195) (Dehalococcoides ethenogenes (strain 195)).